Here is a 115-residue protein sequence, read N- to C-terminus: U31-theraphotoxin-Cg1b (115 aa).

The N-terminal stretch at 1 to 18 (MKLCVIIIASLMVASVSG) is a signal peptide. The propeptide occupies 19-51 (RLRKIKGTELDKKMLLEKLGHGMDIRFEETPRE). 4 disulfide bridges follow: Cys52–Cys67, Cys60–Cys73, Cys64–Cys113, and Cys66–Cys86.

This sequence belongs to the neurotoxin 03 (Tx2) family. 02 subfamily. In terms of tissue distribution, expressed by the venom gland.

It localises to the secreted. Its function is as follows. Probable ion channel inhibitor. The protein is U31-theraphotoxin-Cg1b of Chilobrachys guangxiensis (Chinese earth tiger tarantula).